The sequence spans 515 residues: Bifunctional purine biosynthesis protein PurH (515 aa).

The MGS-like domain maps to Met-1–Val-145.

It belongs to the PurH family.

The catalysed reaction is (6R)-10-formyltetrahydrofolate + 5-amino-1-(5-phospho-beta-D-ribosyl)imidazole-4-carboxamide = 5-formamido-1-(5-phospho-D-ribosyl)imidazole-4-carboxamide + (6S)-5,6,7,8-tetrahydrofolate. The enzyme catalyses IMP + H2O = 5-formamido-1-(5-phospho-D-ribosyl)imidazole-4-carboxamide. The protein operates within purine metabolism; IMP biosynthesis via de novo pathway; 5-formamido-1-(5-phospho-D-ribosyl)imidazole-4-carboxamide from 5-amino-1-(5-phospho-D-ribosyl)imidazole-4-carboxamide (10-formyl THF route): step 1/1. It functions in the pathway purine metabolism; IMP biosynthesis via de novo pathway; IMP from 5-formamido-1-(5-phospho-D-ribosyl)imidazole-4-carboxamide: step 1/1. This is Bifunctional purine biosynthesis protein PurH from Streptococcus suis (strain 98HAH33).